We begin with the raw amino-acid sequence, 350 residues long: Hydroxymethylglutaryl-CoA synthase (350 aa).

The active-site Proton donor/acceptor is the Glu83. The active-site Acyl-thioester intermediate is Cys115. Residues Cys115 and Thr156 each contribute to the (3S)-3-hydroxy-3-methylglutaryl-CoA site. Residue Arg204 coordinates CoA. Positions 206 and 239 each coordinate (3S)-3-hydroxy-3-methylglutaryl-CoA. The active-site Proton donor/acceptor is the His239. Position 244 (Lys244) interacts with CoA. Residues Asn271 and Ser301 each coordinate (3S)-3-hydroxy-3-methylglutaryl-CoA.

Belongs to the thiolase-like superfamily. Archaeal HMG-CoA synthase family. Interacts with acetoacetyl-CoA thiolase that catalyzes the precedent step in the pathway and with a DUF35 protein. The acetoacetyl-CoA thiolase/HMG-CoA synthase complex channels the intermediate via a fused CoA-binding site, which allows for efficient coupling of the endergonic thiolase reaction with the exergonic HMGCS reaction.

It catalyses the reaction acetoacetyl-CoA + acetyl-CoA + H2O = (3S)-3-hydroxy-3-methylglutaryl-CoA + CoA + H(+). Its pathway is metabolic intermediate biosynthesis; (R)-mevalonate biosynthesis; (R)-mevalonate from acetyl-CoA: step 2/3. In terms of biological role, catalyzes the condensation of acetyl-CoA with acetoacetyl-CoA to form 3-hydroxy-3-methylglutaryl-CoA (HMG-CoA). Functions in the mevalonate (MVA) pathway leading to isopentenyl diphosphate (IPP), a key precursor for the biosynthesis of isoprenoid compounds that are building blocks of archaeal membrane lipids. In Thermococcus gammatolerans (strain DSM 15229 / JCM 11827 / EJ3), this protein is Hydroxymethylglutaryl-CoA synthase.